The following is a 194-amino-acid chain: Inner membrane-spanning protein YciB (194 aa).

5 consecutive transmembrane segments (helical) span residues 1–21, 49–69, 77–97, 120–140, and 150–170; these read MKLL…KTTN, EKMH…TILF, WKPS…GWVS, LNYS…YVAY, and FKLF…GVYI.

This sequence belongs to the YciB family.

The protein localises to the cell inner membrane. In terms of biological role, plays a role in cell envelope biogenesis, maintenance of cell envelope integrity and membrane homeostasis. This Hahella chejuensis (strain KCTC 2396) protein is Inner membrane-spanning protein YciB.